A 529-amino-acid chain; its full sequence is Bifunctional purine biosynthesis protein PurH (529 aa).

Positions 1–148 (MQQRRPVRRA…KNHKDVAIVV (148 aa)) constitute an MGS-like domain. Residue Lys287 is modified to N6-acetyllysine.

Belongs to the PurH family.

The catalysed reaction is (6R)-10-formyltetrahydrofolate + 5-amino-1-(5-phospho-beta-D-ribosyl)imidazole-4-carboxamide = 5-formamido-1-(5-phospho-D-ribosyl)imidazole-4-carboxamide + (6S)-5,6,7,8-tetrahydrofolate. It carries out the reaction IMP + H2O = 5-formamido-1-(5-phospho-D-ribosyl)imidazole-4-carboxamide. It participates in purine metabolism; IMP biosynthesis via de novo pathway; 5-formamido-1-(5-phospho-D-ribosyl)imidazole-4-carboxamide from 5-amino-1-(5-phospho-D-ribosyl)imidazole-4-carboxamide (10-formyl THF route): step 1/1. It functions in the pathway purine metabolism; IMP biosynthesis via de novo pathway; IMP from 5-formamido-1-(5-phospho-D-ribosyl)imidazole-4-carboxamide: step 1/1. This chain is Bifunctional purine biosynthesis protein PurH, found in Escherichia coli O7:K1 (strain IAI39 / ExPEC).